We begin with the raw amino-acid sequence, 189 residues long: Elongation factor P (189 aa).

The protein belongs to the elongation factor P family.

The protein resides in the cytoplasm. It functions in the pathway protein biosynthesis; polypeptide chain elongation. Functionally, involved in peptide bond synthesis. Stimulates efficient translation and peptide-bond synthesis on native or reconstituted 70S ribosomes in vitro. Probably functions indirectly by altering the affinity of the ribosome for aminoacyl-tRNA, thus increasing their reactivity as acceptors for peptidyl transferase. This is Elongation factor P from Rhizobium leguminosarum bv. trifolii (strain WSM2304).